The primary structure comprises 64 residues: Outer envelope membrane protein 7 (64 aa).

Topologically, residues 1–11 (MGKTSGAKQAT) are chloroplast intermembrane. A helical transmembrane segment spans residues 12-32 (VVVAAMALGWLAIEIAFKPFL). An AKR2A-binding sequence (ABS) required for chloroplast outer envelope membrane targeting motif is present at residues 29–35 (KPFLDKF). Residues 33–64 (DKFRSSIDKSDPTKDPDDFDTAATATTSKEGL) are Cytoplasmic-facing. Residues 39–48 (IDKSDPTKDP) show a composition bias toward basic and acidic residues. The tract at residues 39–64 (IDKSDPTKDPDDFDTAATATTSKEGL) is disordered. Residues 53 to 64 (TAATATTSKEGL) show a composition bias toward low complexity.

In terms of assembly, interacts with AKR2A. Confined to green tissues.

It localises to the plastid. Its subcellular location is the chloroplast outer membrane. This chain is Outer envelope membrane protein 7, found in Arabidopsis thaliana (Mouse-ear cress).